The chain runs to 360 residues: Secreted LysM effector LysM2 (360 aa).

Residues 1–21 form the signal peptide; the sequence is MKISSLSILPLLGVVSAGIHG. The region spanning 37–85 is the LysM 1 domain; it reads TWYLDLVDDSYTCENIESQWDLSHEAFVAWNPGVKKDCSGLKVGLSVCV. Residues 94-113 are compositionally biased toward low complexity; sequence ATPTSEASTSSETSSASPTA. The segment at 94–125 is disordered; it reads ATPTSEASTSSETSSASPTASRPPLPSPTQDG. Asn-129 carries an N-linked (GlcNAc...) asparagine glycan. A LysM 2 domain is found at 132-179; that stretch reads KFHQAVSGDTCSKIISRYKPITLDQFIEWNPALEKDCSGLWSGYYYCV. Asn-204 carries N-linked (GlcNAc...) asparagine glycosylation. LysM domains lie at 225 to 272 and 311 to 357; these read RWHK…YYCI and KWHQ…YVCV.

Belongs to the secreted LysM effector family.

The protein resides in the secreted. It localises to the cell wall. Its function is as follows. Secreted effector that binds two substrates, chitin and N-linked oligosaccharides associated with human skin glycoproteins. Could provide the pathogen with three important functions including shielding host cell wall chitin from the human immune system, shielding the pathogen's glycoproteins from host degradation and immune surveillance, and helping facilitate pathogen adhesion to human skin. This chain is Secreted LysM effector LysM2, found in Trichophyton rubrum (strain ATCC MYA-4607 / CBS 118892) (Athlete's foot fungus).